The following is a 209-amino-acid chain: Cytidylate kinase (209 aa).

7 to 15 contacts ATP; that stretch reads GPAASGKGT.

This sequence belongs to the cytidylate kinase family. Type 1 subfamily.

The protein resides in the cytoplasm. The enzyme catalyses CMP + ATP = CDP + ADP. The catalysed reaction is dCMP + ATP = dCDP + ADP. This chain is Cytidylate kinase, found in Afipia carboxidovorans (strain ATCC 49405 / DSM 1227 / KCTC 32145 / OM5) (Oligotropha carboxidovorans).